Consider the following 342-residue polypeptide: Methylthioribose-1-phosphate isomerase (342 aa).

Residues 49–51 (RGA), arginine 86, and glutamine 187 each bind substrate. The Proton donor role is filled by aspartate 228. 238 to 239 (NK) contacts substrate.

It belongs to the eIF-2B alpha/beta/delta subunits family. MtnA subfamily.

It carries out the reaction 5-(methylsulfanyl)-alpha-D-ribose 1-phosphate = 5-(methylsulfanyl)-D-ribulose 1-phosphate. The protein operates within amino-acid biosynthesis; L-methionine biosynthesis via salvage pathway; L-methionine from S-methyl-5-thio-alpha-D-ribose 1-phosphate: step 1/6. Functionally, catalyzes the interconversion of methylthioribose-1-phosphate (MTR-1-P) into methylthioribulose-1-phosphate (MTRu-1-P). This is Methylthioribose-1-phosphate isomerase from Serratia proteamaculans (strain 568).